A 266-amino-acid polypeptide reads, in one-letter code: uncharacterized protein (266 aa).

The region spanning 35–131 is the PH domain; it reads VLVGEGVLVK…WMLHIERCVT (97 aa). Residues 152-212 form an FYVE-type zinc finger; that stretch reads DGEAVKCMVC…VCDHCFDSLS (61 aa). Zn(2+) contacts are provided by Cys158, Cys161, Cys175, Cys178, Cys183, Cys186, Cys204, and Cys207. Positions 213–266 are disordered; sequence SATPGQEESEPKTGNRLHHEDSSSDSEDEVNGSGRSSNESRPTFYREDVQQPAT. Composition is skewed to basic and acidic residues over residues 221-234 and 256-266; these read SEPKTGNRLHHEDS and FYREDVQQPAT.

This is an uncharacterized protein from Caenorhabditis elegans.